The primary structure comprises 480 residues: Probable pectin lyase F-2 (480 aa).

An N-terminal signal peptide occupies residues 1 to 25 (MTLIRTVLMAAALLGASAHAQGVVG). C83 and C106 are oxidised to a cystine. N111 carries N-linked (GlcNAc...) asparagine glycosylation. R256 is a catalytic residue. A disulfide bond links C322 and C330. Residues 386-401 (SSSAIPSSTPAPSSSA) show a composition bias toward low complexity. The segment at 386-436 (SSSAIPSSTPAPSSSALAKRHGGHDRHGLGHIPHLTEGGPGAWHTPGPAPS) is disordered.

Belongs to the polysaccharide lyase 1 family.

It is found in the secreted. It catalyses the reaction Eliminative cleavage of (1-&gt;4)-alpha-D-galacturonan methyl ester to give oligosaccharides with 4-deoxy-6-O-methyl-alpha-D-galact-4-enuronosyl groups at their non-reducing ends.. Functionally, pectinolytic enzymes consist of four classes of enzymes: pectin lyase, polygalacturonase, pectin methylesterase and rhamnogalacturonase. Among pectinolytic enzymes, pectin lyase is the most important in depolymerization of pectin, since it cleaves internal glycosidic bonds of highly methylated pectins. This is Probable pectin lyase F-2 (pelF-2) from Aspergillus terreus (strain NIH 2624 / FGSC A1156).